A 202-amino-acid polypeptide reads, in one-letter code: uncharacterized protein (202 aa).

This is an uncharacterized protein from Galliformes (FAdV-1).